The primary structure comprises 146 residues: Phospholipase A2 OS2 (146 aa).

Residues 1-27 form the signal peptide; sequence MHPAHLLVLLAVCVSLLGASDIPPLPL. Disulfide bonds link cysteine 38–cysteine 99, cysteine 54–cysteine 145, cysteine 56–cysteine 72, cysteine 71–cysteine 126, cysteine 78–cysteine 119, cysteine 88–cysteine 112, and cysteine 106–cysteine 117. Residues tyrosine 55, glycine 57, and glycine 59 each contribute to the Ca(2+) site. Histidine 75 is a catalytic residue. Aspartate 76 is a Ca(2+) binding site. Aspartate 120 is an active-site residue.

The protein belongs to the phospholipase A2 family. Group I subfamily. D49 sub-subfamily. In terms of assembly, monomer. Ca(2+) is required as a cofactor. Expressed by the venom gland.

The protein localises to the secreted. It catalyses the reaction a 1,2-diacyl-sn-glycero-3-phosphocholine + H2O = a 1-acyl-sn-glycero-3-phosphocholine + a fatty acid + H(+). Snake venom phospholipase A2 (PLA2) that shows high presynaptic neurotoxicity in vertebrata that is independent of catalytic activity, as well as local myotoxicity when intramuscularly injected into mice. Blocks acetylcholine release in Aplysia neurons, and potentiates pro-inflammatory cellular signaling. Potentiates glutamate excitoxicity when coinjected into brain of rats. May act by binding in a calcium-dependent fashion and with high affinity to a neuronal-type (N-type) PLA2 receptor, and with very high affinity to a muscle-type (M-type) PLA2 receptor. In vitro, shows a high-specific activity on E.coli membranes and is more efficient on the anionic phospholipid POPG than on the anionic phospholipid POPS or the zwitterionic phospholipid POPC. Exerts catalytically-independent anti-HIV (IC(50) is 35 nM) activity and catalytically-dependent antimalarial activity (IC(50) is 3.1 nM when tested on P.falciparum grown in serum that contains lipoproteins). PLA2 catalyzes the calcium-dependent hydrolysis of the 2-acyl groups in 3-sn-phosphoglycerides. The polypeptide is Phospholipase A2 OS2 (Oxyuranus scutellatus scutellatus (Australian taipan)).